A 179-amino-acid polypeptide reads, in one-letter code: Large ribosomal subunit protein uL6 (179 aa).

It belongs to the universal ribosomal protein uL6 family. Part of the 50S ribosomal subunit.

Its function is as follows. This protein binds to the 23S rRNA, and is important in its secondary structure. It is located near the subunit interface in the base of the L7/L12 stalk, and near the tRNA binding site of the peptidyltransferase center. The chain is Large ribosomal subunit protein uL6 from Pelodictyon phaeoclathratiforme (strain DSM 5477 / BU-1).